The chain runs to 88 residues: Small ribosomal subunit protein bS20 (88 aa).

The interval 1 to 20 (MANTAQARKRARQAVVQNAH) is disordered.

It belongs to the bacterial ribosomal protein bS20 family.

Functionally, binds directly to 16S ribosomal RNA. The polypeptide is Small ribosomal subunit protein bS20 (Ralstonia pickettii (strain 12J)).